The sequence spans 250 residues: Coproheme decarboxylase (250 aa).

Fe-coproporphyrin III is bound by residues Arg131, Tyr145 to Lys149, His172, and Gln185. Tyr145 is an active-site residue.

It belongs to the ChdC family. Type 1 subfamily. The cofactor is Fe-coproporphyrin III.

It catalyses the reaction Fe-coproporphyrin III + 2 H2O2 + 2 H(+) = heme b + 2 CO2 + 4 H2O. It carries out the reaction Fe-coproporphyrin III + H2O2 + H(+) = harderoheme III + CO2 + 2 H2O. The enzyme catalyses harderoheme III + H2O2 + H(+) = heme b + CO2 + 2 H2O. Its pathway is porphyrin-containing compound metabolism; protoheme biosynthesis. Its function is as follows. Involved in coproporphyrin-dependent heme b biosynthesis. Catalyzes the decarboxylation of Fe-coproporphyrin III (coproheme) to heme b (protoheme IX), the last step of the pathway. The reaction occurs in a stepwise manner with a three-propionate intermediate. This is Coproheme decarboxylase from Staphylococcus aureus (strain Mu50 / ATCC 700699).